The primary structure comprises 146 residues: Hemoglobin subunit beta (146 aa).

Val1 is subject to N-acetylvaline. In terms of domain architecture, Globin spans 2–146 (HLTPEEKNAV…VANALAHKYH (145 aa)). Thr12 carries the phosphothreonine modification. At Ser44 the chain carries Phosphoserine. Lys59 is subject to N6-acetyllysine. His63 lines the heme b pocket. Residue Lys82 is modified to N6-acetyllysine. Heme b is bound at residue His92. Position 93 is an S-nitrosocysteine (Cys93). Lys144 bears the N6-acetyllysine mark.

The protein belongs to the globin family. In terms of assembly, heterotetramer of two alpha chains and two beta chains. As to expression, red blood cells.

Its function is as follows. Involved in oxygen transport from the lung to the various peripheral tissues. The protein is Hemoglobin subunit beta (HBB) of Papio cynocephalus (Yellow baboon).